Reading from the N-terminus, the 196-residue chain is Nucleoid occlusion factor SlmA (196 aa).

Residues 7–68 (INRREEILQA…GLIEFIEESL (62 aa)) enclose the HTH tetR-type domain. The segment at residues 31–50 (TTAKLAKQVGVSEAALYRHF) is a DNA-binding region (H-T-H motif). Positions 110-139 (HALMFENERLRDRINQLFERIETSLRQILR) form a coiled coil.

Belongs to the nucleoid occlusion factor SlmA family. In terms of assembly, homodimer. Interacts with FtsZ.

It is found in the cytoplasm. The protein resides in the nucleoid. Required for nucleoid occlusion (NO) phenomenon, which prevents Z-ring formation and cell division over the nucleoid. Acts as a DNA-associated cell division inhibitor that binds simultaneously chromosomal DNA and FtsZ, and disrupts the assembly of FtsZ polymers. SlmA-DNA-binding sequences (SBS) are dispersed on non-Ter regions of the chromosome, preventing FtsZ polymerization at these regions. In Vibrio cholerae serotype O1 (strain ATCC 39315 / El Tor Inaba N16961), this protein is Nucleoid occlusion factor SlmA.